Here is an 85-residue protein sequence, read N- to C-terminus: Small ribosomal subunit protein bS16c (85 aa).

The protein belongs to the bacterial ribosomal protein bS16 family.

The protein localises to the plastid. It is found in the chloroplast. This is Small ribosomal subunit protein bS16c from Agrostis stolonifera (Creeping bentgrass).